The sequence spans 156 residues: ATP synthase subunit b (156 aa).

Residues 7–27 (LIGQLIAFALFVAFCMKFVWP) traverse the membrane as a helical segment.

Belongs to the ATPase B chain family. As to quaternary structure, F-type ATPases have 2 components, F(1) - the catalytic core - and F(0) - the membrane proton channel. F(1) has five subunits: alpha(3), beta(3), gamma(1), delta(1), epsilon(1). F(0) has three main subunits: a(1), b(2) and c(10-14). The alpha and beta chains form an alternating ring which encloses part of the gamma chain. F(1) is attached to F(0) by a central stalk formed by the gamma and epsilon chains, while a peripheral stalk is formed by the delta and b chains.

It localises to the cell inner membrane. Its function is as follows. F(1)F(0) ATP synthase produces ATP from ADP in the presence of a proton or sodium gradient. F-type ATPases consist of two structural domains, F(1) containing the extramembraneous catalytic core and F(0) containing the membrane proton channel, linked together by a central stalk and a peripheral stalk. During catalysis, ATP synthesis in the catalytic domain of F(1) is coupled via a rotary mechanism of the central stalk subunits to proton translocation. In terms of biological role, component of the F(0) channel, it forms part of the peripheral stalk, linking F(1) to F(0). The sequence is that of ATP synthase subunit b from Actinobacillus pleuropneumoniae serotype 5b (strain L20).